The chain runs to 377 residues: Ejaculatory bulb-specific protein 1 (377 aa).

An N-terminal signal peptide occupies residues 1 to 20; sequence MVRQLILVLSLILFCGSSHA. The interval 155–253 is disordered; that stretch reads PIRPGGLFPG…NRPGRPFPGG (99 aa). Over residues 165–228 the composition is skewed to pro residues; sequence GPSPGGPSPG…GGSPPSPGGP (64 aa).

In terms of tissue distribution, specifically expressed in the ejaculatory bulb and seminal fluid. Detected in mated females 3 minutes after the start of mating, and for at least 3 hours after the start of mating.

It localises to the secreted. Functionally, major protein component of the posterior mating plug. Accessory gland proteins constitute, or are required for formation of the anterior mating plug. Posterior mating plug forms before sperm transfer and the anterior mating plug is formed after the start of mating. This is Ejaculatory bulb-specific protein 1 from Drosophila melanogaster (Fruit fly).